The primary structure comprises 143 residues: Hemoglobin subunit alpha-2 (143 aa).

Serine 2 carries the post-translational modification N-acetylserine. The Globin domain occupies 2–143 (SLSAKDKATV…LALALSEKYR (142 aa)). Residue histidine 60 coordinates O2. Heme b is bound at residue histidine 89.

The protein belongs to the globin family. As to quaternary structure, hb 2 is a heterotetramer of two alpha-2 and two beta-1 chains. Hb 3 is a heterotetramer of two alpha-2 and two beta-2 chains. In terms of tissue distribution, red blood cells.

Its function is as follows. Involved in oxygen transport from gills to the various peripheral tissues. This is Hemoglobin subunit alpha-2 (hba2) from Boreogadus saida (Polar cod).